A 1146-amino-acid polypeptide reads, in one-letter code: Elicitor of plant defense protein 1 (1146 aa).

2 disordered regions span residues 25 to 75 and 156 to 226; these read DPLP…RLSN and ARPP…PRQG. Basic and acidic residues predominate over residues 164 to 177; it reads RAERIKAEDSDQSG. The uDENN domain occupies 246 to 500; sequence PLNTDPNMHP…NLCTEAFSPL (255 aa). A cDENN domain is found at 522–656; it reads VNEIPGSRTI…HRRKLHALLQ (135 aa). Positions 658–1016 constitute a dDENN domain; the sequence is AAPAKLRYGV…ERETKPGTTA (359 aa). A disordered region spans residues 730–806; that stretch reads LHSKVDPNKP…RRSSSFGVDK (77 aa). The span at 732–743 shows a compositional bias: basic and acidic residues; that stretch reads SKVDPNKPDRPG. Low complexity predominate over residues 744–760; sequence TSKSTRTSPPSSVSPVS. The segment covering 769–783 has biased composition (polar residues); sequence TPVSRSDSGFALTST. The segment covering 784–797 has biased composition (basic and acidic residues); that stretch reads LREKRSRNFDEKTR. Residues 883–931 form a Phorbol-ester/DAG-type zinc finger; the sequence is GHCFNWEEGALSSSCSVCDDRAEGDGIYKCSGCSAFAHGRCLGCVSLAC. The segment at 1121 to 1146 is disordered; sequence PRPEQRGTRGLVRKQVPSMLGTSPTN.

This sequence belongs to the EPD1 elicitor family. In terms of assembly, interacts with host cotton EIR5A (AC A0A5J5T2N2) and EIR5D (AC A0A5J5NT52) and host N.benthamiana EIR (AC P0DXJ0).

It localises to the secreted. The protein localises to the host cell. Acts as an elicitor that triggers defense responses in both Nicotiana benthamiana and cotton plants. Triggers the accumulation of reactive oxygen species (ROS) and the activation of cell death in cotton plants. Induces significantly enhanced resistance of Nicotiana benthamiana to both the broad-host-range filamentous pathogen Botrytis cinerea and the semibiotrophic pathogen Phytophthora capsici. Stimulates the expression of EIR5A (AC A0A5J5T2N2) and EIR5D (AC A0A5J5NT52) in cotton plants and recognition of EPD1 potentiates EIRs to enhance cotton PAMP-triggered immunity (PTI). This is Elicitor of plant defense protein 1 from Verticillium dahliae (strain VdLs.17 / ATCC MYA-4575 / FGSC 10137) (Verticillium wilt).